Consider the following 427-residue polypeptide: 3-phosphoshikimate 1-carboxyvinyltransferase (427 aa).

3 residues coordinate 3-phosphoshikimate: Lys20, Ser21, and Arg25. Lys20 lines the phosphoenolpyruvate pocket. Phosphoenolpyruvate is bound by residues Gly92 and Arg120. Residues Ser166, Gln168, Asp312, and Lys339 each coordinate 3-phosphoshikimate. Residue Gln168 participates in phosphoenolpyruvate binding. Asp312 serves as the catalytic Proton acceptor. Phosphoenolpyruvate is bound by residues Arg343 and Arg385.

Belongs to the EPSP synthase family. As to quaternary structure, monomer.

It localises to the cytoplasm. The catalysed reaction is 3-phosphoshikimate + phosphoenolpyruvate = 5-O-(1-carboxyvinyl)-3-phosphoshikimate + phosphate. Its pathway is metabolic intermediate biosynthesis; chorismate biosynthesis; chorismate from D-erythrose 4-phosphate and phosphoenolpyruvate: step 6/7. Catalyzes the transfer of the enolpyruvyl moiety of phosphoenolpyruvate (PEP) to the 5-hydroxyl of shikimate-3-phosphate (S3P) to produce enolpyruvyl shikimate-3-phosphate and inorganic phosphate. This is 3-phosphoshikimate 1-carboxyvinyltransferase from Streptococcus pneumoniae serotype 19F (strain G54).